Here is a 269-residue protein sequence, read N- to C-terminus: tRNA pseudouridine synthase A (269 aa).

The active-site Nucleophile is the Asp-55. Substrate is bound at residue Tyr-111.

This sequence belongs to the tRNA pseudouridine synthase TruA family.

It catalyses the reaction uridine(38/39/40) in tRNA = pseudouridine(38/39/40) in tRNA. In terms of biological role, formation of pseudouridine at positions 38, 39 and 40 in the anticodon stem and loop of transfer RNAs. This is tRNA pseudouridine synthase A from Methanosarcina acetivorans (strain ATCC 35395 / DSM 2834 / JCM 12185 / C2A).